Reading from the N-terminus, the 156-residue chain is UPF0225 protein PFLU_1319 (156 aa).

It belongs to the UPF0225 family.

This is UPF0225 protein PFLU_1319 from Pseudomonas fluorescens (strain SBW25).